Here is a 370-residue protein sequence, read N- to C-terminus: GDSL esterase/lipase At1g09390 (370 aa).

A signal peptide spans 1–27 (MATLSLHSHSFLLVLLPFILILRQNLA). The active-site Nucleophile is Ser44. Asn90 and Asn315 each carry an N-linked (GlcNAc...) asparagine glycan. Catalysis depends on residues Asp336 and His339.

This sequence belongs to the 'GDSL' lipolytic enzyme family.

The protein resides in the secreted. This chain is GDSL esterase/lipase At1g09390, found in Arabidopsis thaliana (Mouse-ear cress).